A 154-amino-acid chain; its full sequence is Iron-sulfur cluster assembly enzyme IscU (154 aa).

The protein belongs to the NifU family. Component of the mitochondrial core iron-sulfur cluster (ISC) assembly complex at least composed of the cystein desulfurase Nfs1, the scaffold protein IscU, the accessory protein bcn92/Isd11/Lyrm4, and probably fh/frataxin. Interacts with Nfs1. Fe(2+) is required as a cofactor. [2Fe-2S] cluster serves as cofactor.

It participates in cofactor biosynthesis; iron-sulfur cluster biosynthesis. Functionally, scaffold protein for the de novo synthesis of iron-sulfur (Fe-S) clusters within mitochondria, which is required for maturation of both mitochondrial and cytoplasmic [2Fe-2S] and [4Fe-4S] proteins. Component of the mitochondrial core iron-sulfur cluster (ISC) assembly complex; regulates its activity. The polypeptide is Iron-sulfur cluster assembly enzyme IscU (Drosophila melanogaster (Fruit fly)).